The sequence spans 126 residues: Acidic phospholipase A2 S1E6-a (126 aa).

Residues 1–3 (VEG) form the signal peptide. 7 disulfides stabilise this stretch: Cys29–Cys119, Cys31–Cys47, Cys46–Cys98, Cys52–Cys126, Cys53–Cys91, Cys60–Cys84, and Cys78–Cys89. Residues Tyr30, Gly32, and Gly34 each coordinate Ca(2+). The active site involves His50. Asp51 is a Ca(2+) binding site. The active site involves Asp92.

In terms of assembly, homodimer. The cofactor is Ca(2+). In terms of tissue distribution, expressed by the venom gland.

It localises to the secreted. The catalysed reaction is a 1,2-diacyl-sn-glycero-3-phosphocholine + H2O = a 1-acyl-sn-glycero-3-phosphocholine + a fatty acid + H(+). Its function is as follows. Snake venom phospholipase A2 (PLA2) that inhibits ADP-induced platelet aggregation. PLA2 catalyzes the calcium-dependent hydrolysis of the 2-acyl groups in 3-sn-phosphoglycerides. The polypeptide is Acidic phospholipase A2 S1E6-a (Calloselasma rhodostoma (Malayan pit viper)).